The following is a 122-amino-acid chain: Large ribosomal subunit protein eL31 (122 aa).

Belongs to the eukaryotic ribosomal protein eL31 family.

This Caenorhabditis elegans protein is Large ribosomal subunit protein eL31.